Here is a 57-residue protein sequence, read N- to C-terminus: MNEIIITIIVLILLLFITLSRNDRNNNQSNNGKKEKLIKCKKEVQQLRQKLDQLTFQ.

The N-terminal stretch at 1–22 is a signal peptide; that stretch reads MNEIIITIIVLILLLFITLSRN. Positions 26–57 form a coiled coil; it reads NNQSNNGKKEKLIKCKKEVQQLRQKLDQLTFQ.

This is an uncharacterized protein from Acheta domesticus (House cricket).